Here is a 172-residue protein sequence, read N- to C-terminus: Putative phosphoesterase BT9727_1129 (172 aa).

The active-site Proton donor is the H34. Short sequence motifs (HXTX) lie at residues 34 to 37 (HITL) and 115 to 118 (HLTI). The active-site Proton acceptor is H115.

This sequence belongs to the 2H phosphoesterase superfamily. YjcG family.

This chain is Putative phosphoesterase BT9727_1129, found in Bacillus thuringiensis subsp. konkukian (strain 97-27).